The following is a 74-amino-acid chain: Small ribosomal subunit protein bS18 (74 aa).

It belongs to the bacterial ribosomal protein bS18 family. Part of the 30S ribosomal subunit. Forms a tight heterodimer with protein bS6.

Functionally, binds as a heterodimer with protein bS6 to the central domain of the 16S rRNA, where it helps stabilize the platform of the 30S subunit. The protein is Small ribosomal subunit protein bS18 of Novosphingobium aromaticivorans (strain ATCC 700278 / DSM 12444 / CCUG 56034 / CIP 105152 / NBRC 16084 / F199).